The chain runs to 122 residues: UPF0382 membrane protein SAUSA300_0565 (122 aa).

Transmembrane regions (helical) follow at residues 3-23 (LFII…AFGA), 46-66 (MYHG…SINV), 69-89 (AGWL…ILVL), and 98-118 (ITPI…IATF).

This sequence belongs to the UPF0382 family.

It is found in the cell membrane. The polypeptide is UPF0382 membrane protein SAUSA300_0565 (Staphylococcus aureus (strain USA300)).